The primary structure comprises 273 residues: Large ribosomal subunit protein uL2 (273 aa).

The disordered stretch occupies residues 228–273 (VDHPHGGGEGKTSGGRHPVTPWGFPTKGKKTRKNKRTSKFIIKKRK). Over residues 254–273 (KGKKTRKNKRTSKFIIKKRK) the composition is skewed to basic residues.

Belongs to the universal ribosomal protein uL2 family. In terms of assembly, part of the 50S ribosomal subunit. Forms a bridge to the 30S subunit in the 70S ribosome.

One of the primary rRNA binding proteins. Required for association of the 30S and 50S subunits to form the 70S ribosome, for tRNA binding and peptide bond formation. It has been suggested to have peptidyltransferase activity; this is somewhat controversial. Makes several contacts with the 16S rRNA in the 70S ribosome. The sequence is that of Large ribosomal subunit protein uL2 from Rickettsia bellii (strain OSU 85-389).